We begin with the raw amino-acid sequence, 350 residues long: Protein RecA (350 aa).

66–73 (GPESSGKT) lines the ATP pocket.

Belongs to the RecA family.

It localises to the cytoplasm. Functionally, can catalyze the hydrolysis of ATP in the presence of single-stranded DNA, the ATP-dependent uptake of single-stranded DNA by duplex DNA, and the ATP-dependent hybridization of homologous single-stranded DNAs. It interacts with LexA causing its activation and leading to its autocatalytic cleavage. The chain is Protein RecA from Dichelobacter nodosus (strain VCS1703A).